A 109-amino-acid polypeptide reads, in one-letter code: Sulredoxin (109 aa).

In terms of domain architecture, Rieske spans 3–107 (WKRTISAKAL…IRDNNGWIEV (105 aa)). Cys-43, His-45, Cys-62, and His-65 together coordinate [2Fe-2S] cluster.

As to quaternary structure, homooligomeric. Requires [2Fe-2S] cluster as cofactor.

Its subcellular location is the cytoplasm. In terms of biological role, not yet known. The sequence is that of Sulredoxin (sdx) from Sulfurisphaera tokodaii (strain DSM 16993 / JCM 10545 / NBRC 100140 / 7) (Sulfolobus tokodaii).